Consider the following 335-residue polypeptide: Serpentine receptor class alpha-13 (335 aa).

Residues 1 to 22 (MAIVSSENRTCADEKLLALYQS) lie on the Extracellular side of the membrane. The helical transmembrane segment at 23 to 43 (WSYIASIVFNCLVPTISTYFL) threads the bilayer. At 44–61 (GRAIFQLCNQATIQYSTR) the chain is on the cytoplasmic side. The chain crosses the membrane as a helical span at residues 62 to 82 (ILLIATILFAACHQVSYFAFK). Residues 83–107 (IDLLHTMFFKLDQPCFLQRSSYDCR) are Extracellular-facing. The chain crosses the membrane as a helical span at residues 108-128 (FISIAQTTGVVGMALTGLAMS). The Cytoplasmic portion of the chain corresponds to 129–149 (TDRALALTFPADYHKLKSVPR). Residues 150-170 (VVLSVFVFIVSFSTWFLLTMN) traverse the membrane as a helical segment. Topologically, residues 171–192 (DPLTGYLNHCGFYPSYSVANFQ) are extracellular. Residues 193–213 (LMLDVILYLAIFNLIWDVILF) form a helical membrane-spanning segment. Residues 214–235 (YYARQQILWRRSYQFQKRYEAR) lie on the Cytoplasmic side of the membrane. A helical transmembrane segment spans residues 236–255 (ISLNCTQAVFVISICQCISN). Topologically, residues 256 to 278 (GANSGLMRLLMMIGTSITSVTYS) are extracellular. A helical membrane pass occupies residues 279–299 (SLLSLFYTAPYSCILLPILMM). Over 300-335 (RISEYIREQRTIGILSLRSEKPGLEEHHQRMRAAWS) the chain is Cytoplasmic.

Belongs to the nematode receptor-like protein sra family.

It is found in the membrane. Its function is as follows. Chemosensory receptor that negatively regulates RAS/MAPK signaling during vulva induction and the negative regulation of olfaction of volitile attractants. Required for the suppression of vulval induction in response to food starvation. Signaling acts through the GPA-5 G-alpha protein subunit. This chain is Serpentine receptor class alpha-13, found in Caenorhabditis briggsae.